The primary structure comprises 138 residues: Large ribosomal subunit protein uL16 (138 aa).

Belongs to the universal ribosomal protein uL16 family. As to quaternary structure, part of the 50S ribosomal subunit.

In terms of biological role, binds 23S rRNA and is also seen to make contacts with the A and possibly P site tRNAs. This chain is Large ribosomal subunit protein uL16, found in Chlamydia trachomatis serovar D (strain ATCC VR-885 / DSM 19411 / UW-3/Cx).